The chain runs to 260 residues: 2-amino-3,7-dideoxy-D-threo-hept-6-ulosonate synthase 1 (260 aa).

D26 functions as the Proton acceptor in the catalytic mechanism. Residues 26-30 (DHGIT) and 144-146 (YPR) contribute to the 1-deoxy-D-threo-hexo-2,5-diulose 6-phosphate site. Residue Y144 is the Proton donor of the active site. K172 (schiff-base intermediate with substrate) is an active-site residue. 1-deoxy-D-threo-hexo-2,5-diulose 6-phosphate-binding positions include 194–195 (GG) and 221–222 (GR).

It belongs to the DeoC/FbaB aldolase family. ADHS subfamily. In terms of assembly, homodecamer.

The enzyme catalyses 1-deoxy-D-threo-hexo-2,5-diulose 6-phosphate + L-aspartate 4-semialdehyde = 2,3-dioxopropyl phosphate + 2-amino-2,3,7-trideoxy-D-lyxo-hept-6-ulosonate. Its function is as follows. Catalyzes a transaldol reaction between 6-deoxy-5-ketofructose 1-phosphate (DKFP) and L-aspartate semialdehyde (ASA) with an elimination of hydroxypyruvaldehyde phosphate to yield 2-amino-3,7-dideoxy-D-threo-hept-6-ulosonate (ADH). Plays a key role in an alternative pathway of the biosynthesis of 3-dehydroquinate (DHQ), which is involved in the canonical pathway for the biosynthesis of aromatic amino acids. The chain is 2-amino-3,7-dideoxy-D-threo-hept-6-ulosonate synthase 1 from Archaeoglobus fulgidus (strain ATCC 49558 / DSM 4304 / JCM 9628 / NBRC 100126 / VC-16).